We begin with the raw amino-acid sequence, 296 residues long: D-alanine--D-alanine ligase (296 aa).

The ATP-grasp domain maps to 103 to 293; that stretch reads KEILMHHRMP…FDSFVKRIIE (191 aa). 129–180 lines the ATP pocket; the sequence is ISFPAAVKPSSGGSSIATFKVKSIQELKHAYEEASKYGEVMIEQWVTGKEIT. Mg(2+) contacts are provided by aspartate 247, glutamate 260, and asparagine 262.

The protein belongs to the D-alanine--D-alanine ligase family. Mg(2+) serves as cofactor. Requires Mn(2+) as cofactor.

The protein localises to the cytoplasm. It carries out the reaction 2 D-alanine + ATP = D-alanyl-D-alanine + ADP + phosphate + H(+). Its pathway is cell wall biogenesis; peptidoglycan biosynthesis. Cell wall formation. This chain is D-alanine--D-alanine ligase, found in Francisella tularensis subsp. holarctica (strain LVS).